Here is a 248-residue protein sequence, read N- to C-terminus: Protein canopy homolog 4 (248 aa).

The N-terminal stretch at Met1 to Ala21 is a signal peptide. 3 disulfide bridges follow: Cys38–Cys196, Cys41–Cys184, and Cys94–Cys156. The tract at residues Thr200–Leu248 is disordered. A compositionally biased stretch (acidic residues) spans Thr213 to Gly230. Over residues Gly231–Leu248 the composition is skewed to basic and acidic residues.

Belongs to the canopy family. As to quaternary structure, interacts with TLR4.

It localises to the secreted. Its function is as follows. Plays a role in the regulation of the cell surface expression of TLR4. The polypeptide is Protein canopy homolog 4 (CNPY4) (Homo sapiens (Human)).